Here is a 120-residue protein sequence, read N- to C-terminus: uncharacterized protein (120 aa).

The RING-type zinc finger occupies cysteine 70–lysine 109.

This is an uncharacterized protein from Orgyia pseudotsugata multicapsid polyhedrosis virus (OpMNPV).